The sequence spans 317 residues: Tenomodulin (317 aa).

Topologically, residues 1-30 (MAKNPPENCEGCHILNAEALKSKKIRKSLK) are cytoplasmic. Residues 31–50 (ICGLVFGILALTLIVLFWGS) traverse the membrane as a helical; Signal-anchor for type II membrane protein segment. Over 51–317 (KHFWPEVSKK…WWVARMLGRV (267 aa)) the chain is Extracellular. The 94-residue stretch at 93 to 186 (GNGTDETLEV…ICDNVTMYWI (94 aa)) folds into the BRICHOS domain. The N-linked (GlcNAc...) asparagine glycan is linked to Asn-94. An intrachain disulfide couples Cys-120 to Cys-178. Asn-180 is a glycosylation site (N-linked (GlcNAc...) asparagine). Ser-239 carries the post-translational modification Phosphoserine.

The protein belongs to the chondromodulin-1 family. As to expression, highly expressed in tendons.

The protein resides in the membrane. The protein localises to the nucleus envelope. Functionally, may be an angiogenesis inhibitor. This chain is Tenomodulin (Tnmd), found in Rattus norvegicus (Rat).